A 564-amino-acid polypeptide reads, in one-letter code: Glutamate--tRNA ligase (564 aa).

Residues 107–117 (PNPNGPPTLGS) carry the 'HIGH' region motif.

It belongs to the class-I aminoacyl-tRNA synthetase family. Glutamate--tRNA ligase type 2 subfamily.

It is found in the cytoplasm. It catalyses the reaction tRNA(Glu) + L-glutamate + ATP = L-glutamyl-tRNA(Glu) + AMP + diphosphate. Functionally, catalyzes the attachment of glutamate to tRNA(Glu) in a two-step reaction: glutamate is first activated by ATP to form Glu-AMP and then transferred to the acceptor end of tRNA(Glu). The chain is Glutamate--tRNA ligase from Methanothrix thermoacetophila (strain DSM 6194 / JCM 14653 / NBRC 101360 / PT) (Methanosaeta thermophila).